A 373-amino-acid chain; its full sequence is Dual-specificity RNA methyltransferase RlmN (373 aa).

Catalysis depends on glutamate 101, which acts as the Proton acceptor. Residues 107 to 350 (ENKRTTLCVS…TIIRKIRGAD (244 aa)) form the Radical SAM core domain. Residues cysteine 114 and cysteine 355 are joined by a disulfide bond. The [4Fe-4S] cluster site is built by cysteine 121, cysteine 125, and cysteine 128. S-adenosyl-L-methionine-binding positions include 179 to 180 (GE), serine 211, 233 to 235 (SLH), and asparagine 312. Cysteine 355 (S-methylcysteine intermediate) is an active-site residue.

This sequence belongs to the radical SAM superfamily. RlmN family. [4Fe-4S] cluster is required as a cofactor.

Its subcellular location is the cytoplasm. It carries out the reaction adenosine(2503) in 23S rRNA + 2 reduced [2Fe-2S]-[ferredoxin] + 2 S-adenosyl-L-methionine = 2-methyladenosine(2503) in 23S rRNA + 5'-deoxyadenosine + L-methionine + 2 oxidized [2Fe-2S]-[ferredoxin] + S-adenosyl-L-homocysteine. It catalyses the reaction adenosine(37) in tRNA + 2 reduced [2Fe-2S]-[ferredoxin] + 2 S-adenosyl-L-methionine = 2-methyladenosine(37) in tRNA + 5'-deoxyadenosine + L-methionine + 2 oxidized [2Fe-2S]-[ferredoxin] + S-adenosyl-L-homocysteine. Functionally, specifically methylates position 2 of adenine 2503 in 23S rRNA and position 2 of adenine 37 in tRNAs. m2A2503 modification seems to play a crucial role in the proofreading step occurring at the peptidyl transferase center and thus would serve to optimize ribosomal fidelity. In Blochmanniella pennsylvanica (strain BPEN), this protein is Dual-specificity RNA methyltransferase RlmN.